The chain runs to 143 residues: 3-dehydroquinate dehydratase (143 aa).

Tyr-22 functions as the Proton acceptor in the catalytic mechanism. Asn-73, His-79, and Asp-86 together coordinate substrate. The active-site Proton donor is the His-99. Residues 100–101 and Arg-110 contribute to the substrate site; that span reads IS.

This sequence belongs to the type-II 3-dehydroquinase family. Homododecamer.

It carries out the reaction 3-dehydroquinate = 3-dehydroshikimate + H2O. Its pathway is metabolic intermediate biosynthesis; chorismate biosynthesis; chorismate from D-erythrose 4-phosphate and phosphoenolpyruvate: step 3/7. In terms of biological role, catalyzes a trans-dehydration via an enolate intermediate. The polypeptide is 3-dehydroquinate dehydratase (Salinispora arenicola (strain CNS-205)).